The chain runs to 98 residues: DNA-binding protein Fis (98 aa).

The H-T-H motif DNA-binding region spans glutamine 74–lysine 93.

Belongs to the transcriptional regulatory Fis family. As to quaternary structure, homodimer.

Activates ribosomal RNA transcription. Plays a direct role in upstream activation of rRNA promoters. The protein is DNA-binding protein Fis of Photobacterium profundum (strain SS9).